The chain runs to 288 residues: ATP synthase gamma chain (288 aa).

Belongs to the ATPase gamma chain family. F-type ATPases have 2 components, CF(1) - the catalytic core - and CF(0) - the membrane proton channel. CF(1) has five subunits: alpha(3), beta(3), gamma(1), delta(1), epsilon(1). CF(0) has three main subunits: a, b and c.

It is found in the cell inner membrane. Produces ATP from ADP in the presence of a proton gradient across the membrane. The gamma chain is believed to be important in regulating ATPase activity and the flow of protons through the CF(0) complex. The polypeptide is ATP synthase gamma chain (Rickettsia bellii (strain OSU 85-389)).